Consider the following 499-residue polypeptide: Gypsy retrotransposon integrase-like protein 1 (499 aa).

The Integrase catalytic domain maps to 113 to 270 (KVENPWSIVT…TPYFQMFNRN (158 aa)).

The polypeptide is Gypsy retrotransposon integrase-like protein 1 (GIN1) (Bos taurus (Bovine)).